A 316-amino-acid chain; its full sequence is Thymidylate synthase (316 aa).

Residues arginine 23 and 178 to 179 (RR) each bind dUMP. Cysteine 198 (nucleophile) is an active-site residue. DUMP-binding positions include 218–221 (RSAD), asparagine 229, and 259–261 (HLY). Aspartate 221 serves as a coordination point for (6R)-5,10-methylene-5,6,7,8-tetrahydrofolate. Alanine 315 contacts (6R)-5,10-methylene-5,6,7,8-tetrahydrofolate.

This sequence belongs to the thymidylate synthase family. Bacterial-type ThyA subfamily. As to quaternary structure, homodimer.

It localises to the cytoplasm. The enzyme catalyses dUMP + (6R)-5,10-methylene-5,6,7,8-tetrahydrofolate = 7,8-dihydrofolate + dTMP. The protein operates within pyrimidine metabolism; dTTP biosynthesis. Catalyzes the reductive methylation of 2'-deoxyuridine-5'-monophosphate (dUMP) to 2'-deoxythymidine-5'-monophosphate (dTMP) while utilizing 5,10-methylenetetrahydrofolate (mTHF) as the methyl donor and reductant in the reaction, yielding dihydrofolate (DHF) as a by-product. This enzymatic reaction provides an intracellular de novo source of dTMP, an essential precursor for DNA biosynthesis. This chain is Thymidylate synthase, found in Lacticaseibacillus casei (Lactobacillus casei).